The following is a 438-amino-acid chain: GDP-mannose 6-dehydrogenase (438 aa).

NAD(+) is bound by residues Tyr-10, Val-11, Asp-30, Lys-35, Thr-86, and Thr-124. GDP-alpha-D-mannuronate contacts are provided by Glu-161, Lys-210, Asn-214, His-217, Asn-225, Tyr-256, Tyr-257, Arg-259, Phe-262, and Gly-265. The active site involves Cys-268. An NAD(+)-binding site is contributed by Lys-271. Lys-324 contacts GDP-alpha-D-mannuronate. Residue Arg-331 participates in NAD(+) binding.

It belongs to the UDP-glucose/GDP-mannose dehydrogenase family.

The enzyme catalyses GDP-alpha-D-mannose + 2 NAD(+) + H2O = GDP-alpha-D-mannuronate + 2 NADH + 3 H(+). Its pathway is glycan biosynthesis; alginate biosynthesis. Its function is as follows. Catalyzes the oxidation of guanosine diphospho-D-mannose (GDP-D-mannose) to GDP-D-mannuronic acid, a precursor for alginate polymerization. The alginate layer causes a mucoid phenotype and provides a protective barrier against host immune defenses and antibiotics. The polypeptide is GDP-mannose 6-dehydrogenase (algD) (Pseudomonas putida (strain ATCC 47054 / DSM 6125 / CFBP 8728 / NCIMB 11950 / KT2440)).